Here is an 82-residue protein sequence, read N- to C-terminus: Small ribosomal subunit protein bS16 (82 aa).

It belongs to the bacterial ribosomal protein bS16 family.

The chain is Small ribosomal subunit protein bS16 from Erwinia tasmaniensis (strain DSM 17950 / CFBP 7177 / CIP 109463 / NCPPB 4357 / Et1/99).